Here is a 392-residue protein sequence, read N- to C-terminus: Tryptophan 2,3-dioxygenase (392 aa).

Substrate is bound by residues 57–61 (FIVTH) and Arg128. Position 313 (His313) interacts with heme. A substrate-binding site is contributed by Thr328.

The protein belongs to the tryptophan 2,3-dioxygenase family. As to quaternary structure, homotetramer. Dimer of dimers. Requires heme as cofactor.

It carries out the reaction L-tryptophan + O2 = N-formyl-L-kynurenine. It functions in the pathway amino-acid degradation; L-tryptophan degradation via kynurenine pathway; L-kynurenine from L-tryptophan: step 1/2. It participates in pigment biosynthesis; ommochrome biosynthesis. Heme-dependent dioxygenase that catalyzes the oxidative cleavage of the L-tryptophan (L-Trp) pyrrole ring and converts L-tryptophan to N-formyl-L-kynurenine. Catalyzes the oxidative cleavage of the indole moiety. The polypeptide is Tryptophan 2,3-dioxygenase (Anopheles gambiae (African malaria mosquito)).